The primary structure comprises 78 residues: Acyl carrier protein (78 aa).

The region spanning 2 to 77 (SDIAERVKKI…DAIKFLEKNS (76 aa)) is the Carrier domain. The residue at position 37 (Ser-37) is an O-(pantetheine 4'-phosphoryl)serine.

The protein belongs to the acyl carrier protein (ACP) family. Post-translationally, 4'-phosphopantetheine is transferred from CoA to a specific serine of apo-ACP by AcpS. This modification is essential for activity because fatty acids are bound in thioester linkage to the sulfhydryl of the prosthetic group.

It localises to the cytoplasm. It functions in the pathway lipid metabolism; fatty acid biosynthesis. In terms of biological role, carrier of the growing fatty acid chain in fatty acid biosynthesis. This Methylorubrum extorquens (strain CM4 / NCIMB 13688) (Methylobacterium extorquens) protein is Acyl carrier protein.